The primary structure comprises 672 residues: Transcriptional regulator Kaiso (672 aa).

Residues Met-1 to Lys-103 are interaction with NCOR1. The segment at Met-1–Glu-136 is self-association. The 63-residue stretch at Cys-32–Arg-94 folds into the BTB domain. Residues Lys-151 and Lys-153 each participate in a glycyl lysine isopeptide (Lys-Gly) (interchain with G-Cter in SUMO2) cross-link. Phosphothreonine is present on Thr-251. Positions Leu-298 to His-573 are interaction with CBFA2T3. The tract at residues Lys-325–Ser-354 is disordered. A compositionally biased stretch (acidic residues) spans Glu-328–Thr-341. Residues Lys-390, Lys-407, Lys-414, Lys-449, Lys-465, Lys-474, and Lys-479 each participate in a glycyl lysine isopeptide (Lys-Gly) (interchain with G-Cter in SUMO2) cross-link. The tract at residues Glu-454–Tyr-672 is interaction with CTNND1. A Nuclear localization signal motif is present at residues Met-471–His-480. C2H2-type zinc fingers lie at residues Tyr-494 to His-516, Tyr-522 to His-544, and Tyr-550 to His-573. Residues Asn-514–Met-638 are required for DNA-binding. Residues Lys-539, Lys-570, Lys-582, Lys-611, and Lys-618 each participate in a glycyl lysine isopeptide (Lys-Gly) (interchain with G-Cter in SUMO2) cross-link. The disordered stretch occupies residues Gly-616–Asn-635.

In terms of assembly, self-associates. Interacts with CTNND2. Interacts with CTNND1, and this interaction inhibits binding to both methylated and non-methylated DNA. Interacts with NCOR1. Interacts with KPNA2/RCH1, which may mediate nuclear import of this protein. Interacts with CBFA2T3. As to expression, expressed in vascular endothelium.

Its subcellular location is the nucleus. The protein localises to the cytoplasm. In terms of biological role, transcriptional regulator with bimodal DNA-binding specificity. Binds to methylated CpG dinucleotides in the consensus sequence 5'-CGCG-3' and also binds to the non-methylated consensus sequence 5'-CTGCNA-3' also known as the consensus kaiso binding site (KBS). Recruits the N-CoR repressor complex to promote histone deacetylation and the formation of repressive chromatin structures in target gene promoters. May contribute to the repression of target genes of the Wnt signaling pathway. May also activate transcription of a subset of target genes by the recruitment of CTNND2. Represses expression of MMP7 in conjunction with transcriptional corepressors CBFA2T3, CBFA2T2 and RUNX1T1. This chain is Transcriptional regulator Kaiso (ZBTB33), found in Homo sapiens (Human).